The following is a 51-amino-acid chain: Insulin-2 (51 aa).

Intrachain disulfides connect C8-C37, C20-C50, and C36-C41.

The protein belongs to the insulin family. Heterodimer of a B chain and an A chain linked by two disulfide bonds.

Its subcellular location is the secreted. Functionally, insulin decreases blood glucose concentration. It increases cell permeability to monosaccharides, amino acids and fatty acids. It accelerates glycolysis, the pentose phosphate cycle, and glycogen synthesis in liver. In Katsuwonus pelamis (Skipjack tuna), this protein is Insulin-2.